A 453-amino-acid polypeptide reads, in one-letter code: Pup--protein ligase (453 aa).

Position 9 (Glu9) interacts with Mg(2+). Arg53 contributes to the ATP binding site. Tyr55 is a Mg(2+) binding site. Catalysis depends on Asp57, which acts as the Proton acceptor. Mg(2+) is bound at residue Glu63. ATP-binding residues include Thr66 and Trp420.

This sequence belongs to the Pup ligase/Pup deamidase family. Pup-conjugating enzyme subfamily.

It carries out the reaction ATP + [prokaryotic ubiquitin-like protein]-L-glutamate + [protein]-L-lysine = ADP + phosphate + N(6)-([prokaryotic ubiquitin-like protein]-gamma-L-glutamyl)-[protein]-L-lysine.. It participates in protein degradation; proteasomal Pup-dependent pathway. The protein operates within protein modification; protein pupylation. In terms of biological role, catalyzes the covalent attachment of the prokaryotic ubiquitin-like protein modifier Pup to the proteasomal substrate proteins, thereby targeting them for proteasomal degradation. This tagging system is termed pupylation. The ligation reaction involves the side-chain carboxylate of the C-terminal glutamate of Pup and the side-chain amino group of a substrate lysine. This is Pup--protein ligase from Kineococcus radiotolerans (strain ATCC BAA-149 / DSM 14245 / SRS30216).